Consider the following 128-residue polypeptide: Glycophorin-C (128 aa).

Polar residues predominate over residues 1–12 (MWSTRSPNSTAW). The tract at residues 1–48 (MWSTRSPNSTAWPLSLEPDPGMASASTTMHTTTIAEPDPGMSGWPDGR) is disordered. Residues 1-57 (MWSTRSPNSTAWPLSLEPDPGMASASTTMHTTTIAEPDPGMSGWPDGRMETSTPTIM) are Extracellular-facing. Serine 3 is a glycosylation site (O-linked (GalNAc...) serine). Threonine 4 carries O-linked (GalNAc...) threonine glycosylation. Serine 6 is a glycosylation site (O-linked (GalNAc...) serine). The N-linked (GlcNAc...) asparagine glycan is linked to asparagine 8. Serine 9 is a glycosylation site (O-linked (GalNAc...) serine). Residue threonine 10 is glycosylated (O-linked (GalNAc...) threonine). O-linked (GalNAc...) serine glycosylation is found at serine 15, serine 24, and serine 26. A compositionally biased stretch (low complexity) spans 22–33 (MASASTTMHTTT). Residues threonine 27, threonine 28, threonine 31, threonine 32, and threonine 33 are each glycosylated (O-linked (GalNAc...) threonine). Serine 42 carries O-linked (GalNAc...) serine glycosylation. A helical; Signal-anchor for type III membrane protein membrane pass occupies residues 58 to 81 (DIVVIAGVIAAVAIVLVSLLFVML). Residues 82–128 (RYMYRHKGTYHTNEAKGTEFAESADAALQGDPALQDAGDSSRKEYFI) are Cytoplasmic-facing. A phosphoserine mark is found at serine 104 and serine 122. A disordered region spans residues 108-128 (ALQGDPALQDAGDSSRKEYFI).

This sequence belongs to the glycophorin-C family. Post-translationally, O-glycosylated with core 1 or possibly core 8 glycans. Glycophorin-C is expressed in erythrocytes. Glycophorin-D and IsoGPC are ubiquitously expressed.

The protein localises to the cell membrane. In terms of biological role, this protein is a minor sialoglycoprotein in human erythrocyte membranes. The blood group Gerbich antigens and receptors for Plasmodium falciparum merozoites are most likely located within the extracellular domain. Glycophorin-C plays an important role in regulating the stability of red cells. This Homo sapiens (Human) protein is Glycophorin-C (GYPC).